The primary structure comprises 360 residues: Mitogen-activated protein kinase 14 (360 aa).

The residue at position 2 (serine 2) is an N-acetylserine. Serine 2 is modified (phosphoserine). Threonine 16 is subject to Phosphothreonine. The Protein kinase domain maps to 24-308 (YQNLSPVGSG…AAQALAHAYF (285 aa)). ATP-binding positions include 30 to 38 (VGSGAYGSV) and lysine 53. Lysine 53 is modified (N6-acetyllysine). The active-site Proton acceptor is the aspartate 150. Residue lysine 152 is modified to N6-acetyllysine. Threonine 180 carries the post-translational modification Phosphothreonine; by MAP2K3, MAP2K4, MAP2K6 and autocatalysis. Residues 180–182 (TGY) carry the TXY motif. Phosphotyrosine; by MAP2K3, MAP2K4, MAP2K6 and autocatalysis is present on tyrosine 182. At threonine 263 the chain carries Phosphothreonine. Tyrosine 323 is modified (phosphotyrosine; by ZAP70).

Belongs to the protein kinase superfamily. CMGC Ser/Thr protein kinase family. MAP kinase subfamily. As to quaternary structure, component of a signaling complex containing at least AKAP13, PKN1, MAPK14, ZAK and MAP2K3. Within this complex, AKAP13 interacts directly with PKN1, which in turn recruits MAPK14, MAP2K3 and ZAK. Binds to a kinase interaction motif within the protein tyrosine phosphatase, PTPRR. This interaction retains MAPK14 in the cytoplasm and prevents nuclear accumulation. Interacts with SPAG9 and GADD45A. Interacts with CDC25B, CDC25C, DUSP1, DUSP10, DUSP16, NP60, SUPT20H and TAB1. Interacts with casein kinase II subunits CSNK2A1 and CSNK2B. Interacts with PPM1D. Interacts with CDK5RAP3; recruits PPM1D to MAPK14 and may regulate its dephosphorylation. Interacts with DUSP2; this interaction does not lead to catalytic activation of DUSP2 and dephosphrylation of MAPK14. Mg(2+) serves as cofactor. Post-translationally, dually phosphorylated on Thr-180 and Tyr-182 by the MAP2Ks MAP2K3/MKK3, MAP2K4/MKK4 and MAP2K6/MKK6 in response to inflammatory citokines, environmental stress or growth factors, which activates the enzyme. Dual phosphorylation can also be mediated by TAB1-mediated autophosphorylation. TCR engagement in T-cells also leads to Tyr-323 phosphorylation by ZAP70. Dephosphorylated and inactivated by DUPS1, DUSP10 and DUSP16. PPM1D also mediates dephosphorylation and inactivation of MAPK14. In terms of processing, acetylated at Lys-53 and Lys-152 by KAT2B and EP300. Acetylation at Lys-53 increases the affinity for ATP and enhances kinase activity. Lys-53 and Lys-152 are deacetylated by HDAC3. Ubiquitinated. Ubiquitination leads to degradation by the proteasome pathway.

It localises to the cytoplasm. The protein resides in the nucleus. The catalysed reaction is L-seryl-[protein] + ATP = O-phospho-L-seryl-[protein] + ADP + H(+). It carries out the reaction L-threonyl-[protein] + ATP = O-phospho-L-threonyl-[protein] + ADP + H(+). With respect to regulation, activated by cell stresses such as DNA damage, heat shock, osmotic shock, anisomycin and sodium arsenite, as well as pro-inflammatory stimuli such as bacterial lipopolysaccharide (LPS) and interleukin-1. Activation occurs through dual phosphorylation of Thr-180 and Tyr-182 by either of two dual specificity kinases, MAP2K3/MKK3 or MAP2K6/MKK6, and potentially also MAP2K4/MKK4, as well as by TAB1-mediated autophosphorylation. MAPK14 phosphorylated on both Thr-180 and Tyr-182 is 10-20-fold more active than MAPK14 phosphorylated only on Thr-180, whereas MAPK14 phosphorylated on Tyr-182 alone is inactive. whereas Thr-180 is necessary for catalysis, Tyr-182 may be required for auto-activation and substrate recognition. Phosphorylated at Tyr-323 by ZAP70 in an alternative activation pathway in response to TCR signaling in T-cells. This alternative pathway is inhibited by GADD45A. Inhibited by dual specificity phosphatases, such as DUSP1, DUSP10, and DUSP16. Specifically inhibited by the binding of pyridinyl-imidazole compounds, which are cytokine-suppressive anti-inflammatory drugs (CSAID). SB203580 is an inhibitor of MAPK14. Functionally, serine/threonine kinase which acts as an essential component of the MAP kinase signal transduction pathway. MAPK14 is one of the four p38 MAPKs which play an important role in the cascades of cellular responses evoked by extracellular stimuli such as pro-inflammatory cytokines or physical stress leading to direct activation of transcription factors. Accordingly, p38 MAPKs phosphorylate a broad range of proteins and it has been estimated that they may have approximately 200 to 300 substrates each. Some of the targets are downstream kinases which are activated through phosphorylation and further phosphorylate additional targets. RPS6KA5/MSK1 and RPS6KA4/MSK2 can directly phosphorylate and activate transcription factors such as CREB1, ATF1, the NF-kappa-B isoform RELA/NFKB3, STAT1 and STAT3, but can also phosphorylate histone H3 and the nucleosomal protein HMGN1. RPS6KA5/MSK1 and RPS6KA4/MSK2 play important roles in the rapid induction of immediate-early genes in response to stress or mitogenic stimuli, either by inducing chromatin remodeling or by recruiting the transcription machinery. On the other hand, two other kinase targets, MAPKAPK2/MK2 and MAPKAPK3/MK3, participate in the control of gene expression mostly at the post-transcriptional level, by phosphorylating ZFP36 (tristetraprolin) and ELAVL1, and by regulating EEF2K, which is important for the elongation of mRNA during translation. MKNK1/MNK1 and MKNK2/MNK2, two other kinases activated by p38 MAPKs, regulate protein synthesis by phosphorylating the initiation factor EIF4E2. MAPK14 also interacts with casein kinase II, leading to its activation through autophosphorylation and further phosphorylation of TP53/p53. In the cytoplasm, the p38 MAPK pathway is an important regulator of protein turnover. For example, CFLAR is an inhibitor of TNF-induced apoptosis whose proteasome-mediated degradation is regulated by p38 MAPK phosphorylation. In a similar way, MAPK14 phosphorylates the ubiquitin ligase SIAH2, regulating its activity towards EGLN3. MAPK14 may also inhibit the lysosomal degradation pathway of autophagy by interfering with the intracellular trafficking of the transmembrane protein ATG9. Another function of MAPK14 is to regulate the endocytosis of membrane receptors by different mechanisms that impinge on the small GTPase RAB5A. In addition, clathrin-mediated EGFR internalization induced by inflammatory cytokines and UV irradiation depends on MAPK14-mediated phosphorylation of EGFR itself as well as of RAB5A effectors. Ectodomain shedding of transmembrane proteins is regulated by p38 MAPKs as well. In response to inflammatory stimuli, p38 MAPKs phosphorylate the membrane-associated metalloprotease ADAM17. Such phosphorylation is required for ADAM17-mediated ectodomain shedding of TGF-alpha family ligands, which results in the activation of EGFR signaling and cell proliferation. Another p38 MAPK substrate is FGFR1. FGFR1 can be translocated from the extracellular space into the cytosol and nucleus of target cells, and regulates processes such as rRNA synthesis and cell growth. FGFR1 translocation requires p38 MAPK activation. In the nucleus, many transcription factors are phosphorylated and activated by p38 MAPKs in response to different stimuli. Classical examples include ATF1, ATF2, ATF6, ELK1, PTPRH, DDIT3, TP53/p53 and MEF2C and MEF2A. The p38 MAPKs are emerging as important modulators of gene expression by regulating chromatin modifiers and remodelers. The promoters of several genes involved in the inflammatory response, such as IL6, IL8 and IL12B, display a p38 MAPK-dependent enrichment of histone H3 phosphorylation on 'Ser-10' (H3S10ph) in LPS-stimulated myeloid cells. This phosphorylation enhances the accessibility of the cryptic NF-kappa-B-binding sites marking promoters for increased NF-kappa-B recruitment. Phosphorylates CDC25B and CDC25C which is required for binding to 14-3-3 proteins and leads to initiation of a G2 delay after ultraviolet radiation. Phosphorylates TIAR following DNA damage, releasing TIAR from GADD45A mRNA and preventing mRNA degradation. The p38 MAPKs may also have kinase-independent roles, which are thought to be due to the binding to targets in the absence of phosphorylation. Protein O-Glc-N-acylation catalyzed by the OGT is regulated by MAPK14, and, although OGT does not seem to be phosphorylated by MAPK14, their interaction increases upon MAPK14 activation induced by glucose deprivation. This interaction may regulate OGT activity by recruiting it to specific targets such as neurofilament H, stimulating its O-Glc-N-acylation. Required in mid-fetal development for the growth of embryo-derived blood vessels in the labyrinth layer of the placenta. Also plays an essential role in developmental and stress-induced erythropoiesis, through regulation of EPO gene expression. Phosphorylates S100A9 at 'Thr-113'. The chain is Mitogen-activated protein kinase 14 from Canis lupus familiaris (Dog).